A 622-amino-acid chain; its full sequence is Matrilin-4 (622 aa).

The first 18 residues, 1–18 (MRGLLCWPVLLLLLQPWE), serve as a signal peptide directing secretion. Residues 34 to 213 (DLVFVIDSSR…EFGLQFQSRL (180 aa)) enclose the VWFA 1 domain. A glycan (N-linked (GlcNAc...) asparagine) is linked at Asn69. In terms of domain architecture, EGF-like 1; incomplete spans 215–255 (GKDQCAEGGHGCQHQCVNAWAMFHCTCNPGYKLAADNKSCL). 12 disulfides stabilise this stretch: Cys219/Cys230, Cys226/Cys239, Cys241/Cys254, Cys260/Cys271, Cys267/Cys280, Cys282/Cys295, Cys301/Cys312, Cys308/Cys321, Cys323/Cys336, Cys342/Cys353, Cys349/Cys362, and Cys364/Cys377. N-linked (GlcNAc...) asparagine glycosylation is present at Asn251. EGF-like domains follow at residues 256–292 (AIDL…QQDQ), 297–337 (AIDY…RSCQ), and 342–377 (CNGV…GKSC). An N-linked (GlcNAc...) asparagine glycan is attached at Asn305. Residues 386–561 (DLVLLVDGSK…GTMTHLLENL (176 aa)) enclose the VWFA 2 domain. Residues 591–622 (GRTLGALESLTLNLAQLTARLEDLENQLANQK) are a coiled coil.

Interacts with COMP. As to expression, embryonic kidney, lung and placenta.

It localises to the secreted. Functionally, major component of the extracellular matrix of cartilage. In Homo sapiens (Human), this protein is Matrilin-4 (MATN4).